Reading from the N-terminus, the 249-residue chain is Large ribosomal subunit protein uL10m (249 aa).

Residues 1–31 (MLQLRFMPGWVPRNGFFGLKETIGTVHKRFY) constitute a mitochondrion transit peptide. Residues 226–249 (SHNDNQKPKEDVESTTDAESKGSK) form a disordered region.

Belongs to the universal ribosomal protein uL10 family. In terms of assembly, component of the mitochondrial large ribosomal subunit (mt-LSU). Mature yeast 74S mitochondrial ribosomes consist of a small (37S) and a large (54S) subunit. The 37S small subunit contains a 15S ribosomal RNA (15S mt-rRNA) and 34 different proteins. The 54S large subunit contains a 21S rRNA (21S mt-rRNA) and 46 different proteins.

The protein localises to the mitochondrion. In terms of biological role, component of the mitochondrial ribosome (mitoribosome), a dedicated translation machinery responsible for the synthesis of mitochondrial genome-encoded proteins, including at least some of the essential transmembrane subunits of the mitochondrial respiratory chain. The mitoribosomes are attached to the mitochondrial inner membrane and translation products are cotranslationally integrated into the membrane. The protein is Large ribosomal subunit protein uL10m (MRPL11) of Saccharomyces cerevisiae (strain ATCC 204508 / S288c) (Baker's yeast).